A 262-amino-acid chain; its full sequence is 3-methyl-2-oxobutanoate hydroxymethyltransferase (262 aa).

The Mg(2+) site is built by aspartate 44 and aspartate 83. 3-methyl-2-oxobutanoate-binding positions include 44–45 (DS), aspartate 83, and lysine 112. Glutamate 114 serves as a coordination point for Mg(2+). Catalysis depends on glutamate 180, which acts as the Proton acceptor.

The protein belongs to the PanB family. In terms of assembly, homodecamer; pentamer of dimers. It depends on Mg(2+) as a cofactor.

It localises to the cytoplasm. It catalyses the reaction 3-methyl-2-oxobutanoate + (6R)-5,10-methylene-5,6,7,8-tetrahydrofolate + H2O = 2-dehydropantoate + (6S)-5,6,7,8-tetrahydrofolate. It participates in cofactor biosynthesis; (R)-pantothenate biosynthesis; (R)-pantoate from 3-methyl-2-oxobutanoate: step 1/2. In terms of biological role, catalyzes the reversible reaction in which hydroxymethyl group from 5,10-methylenetetrahydrofolate is transferred onto alpha-ketoisovalerate to form ketopantoate. This chain is 3-methyl-2-oxobutanoate hydroxymethyltransferase, found in Chromobacterium violaceum (strain ATCC 12472 / DSM 30191 / JCM 1249 / CCUG 213 / NBRC 12614 / NCIMB 9131 / NCTC 9757 / MK).